Reading from the N-terminus, the 583-residue chain is Aspartate--tRNA ligase (583 aa).

Residue E174 participates in L-aspartate binding. The aspartate stretch occupies residues 198-201; the sequence is QTFK. R220 contributes to the L-aspartate binding site. ATP contacts are provided by residues 220–222 and Q229; that span reads RDE. An L-aspartate-binding site is contributed by H445. E479 provides a ligand contact to ATP. R486 lines the L-aspartate pocket. 531 to 534 contacts ATP; the sequence is GLDR.

The protein belongs to the class-II aminoacyl-tRNA synthetase family. Type 1 subfamily. As to quaternary structure, homodimer.

The protein localises to the cytoplasm. The enzyme catalyses tRNA(Asp) + L-aspartate + ATP = L-aspartyl-tRNA(Asp) + AMP + diphosphate. In terms of biological role, catalyzes the attachment of L-aspartate to tRNA(Asp) in a two-step reaction: L-aspartate is first activated by ATP to form Asp-AMP and then transferred to the acceptor end of tRNA(Asp). In Flavobacterium psychrophilum (strain ATCC 49511 / DSM 21280 / CIP 103535 / JIP02/86), this protein is Aspartate--tRNA ligase.